A 191-amino-acid chain; its full sequence is Protein hugin (191 aa).

An N-terminal signal peptide occupies residues 1-24 (MCGPSYCTLLLIAASCYILVCSHA). Positions 25–119 (KSLQGTSKLD…LTYYLLLQKL (95 aa)) are excised as a propeptide. Leucine amide is present on residues leucine 137 and leucine 181. Positions 185 to 191 (AQVCGGD) are excised as a propeptide.

It belongs to the pyrokinin family. As to expression, expressed in a subgroup of neurosecretory cells in the subesophageal ganglion from embryonic stage 9 to larval stages.

It is found in the secreted. Functionally, probably has a role in larval molting. In Drosophila melanogaster (Fruit fly), this protein is Protein hugin (Hug).